Reading from the N-terminus, the 572-residue chain is Urease subunit alpha (572 aa).

Positions 136–572 (GGIDTHIHWI…VPLAQRYFLF (437 aa)) constitute a Urease domain. Ni(2+) contacts are provided by His141, His143, and Lys224. Residue Lys224 is modified to N6-carboxylysine. A substrate-binding site is contributed by His226. The Ni(2+) site is built by His253 and His279. His327 (proton donor) is an active-site residue. Asp367 contacts Ni(2+).

This sequence belongs to the metallo-dependent hydrolases superfamily. Urease alpha subunit family. As to quaternary structure, heterotrimer of UreA (gamma), UreB (beta) and UreC (alpha) subunits. Three heterotrimers associate to form the active enzyme. The cofactor is Ni cation. In terms of processing, carboxylation allows a single lysine to coordinate two nickel ions.

It is found in the cytoplasm. The catalysed reaction is urea + 2 H2O + H(+) = hydrogencarbonate + 2 NH4(+). It functions in the pathway nitrogen metabolism; urea degradation; CO(2) and NH(3) from urea (urease route): step 1/1. In Actinobacillus pleuropneumoniae serotype 7 (strain AP76), this protein is Urease subunit alpha.